Reading from the N-terminus, the 371-residue chain is Carnitine monooxygenase oxygenase subunit (371 aa).

One can recognise a Rieske domain in the interval 44-152 (WICVAHGSEL…VEEYAGFVFI (109 aa)). 4 residues coordinate [2Fe-2S] cluster: C86, H88, C106, and H109. Fe cation-binding residues include H208, H213, and D323.

The protein belongs to the bacterial ring-hydroxylating dioxygenase alpha subunit family. CntA subfamily. Composed of an oxygenase subunit and a reductase subunit. [2Fe-2S] cluster serves as cofactor. The cofactor is Fe cation.

It catalyses the reaction (R)-carnitine + NADH + O2 + H(+) = (3R)-3-hydroxy-4-oxobutanoate + trimethylamine + NAD(+) + H2O. The enzyme catalyses (R)-carnitine + NADPH + O2 + H(+) = (3R)-3-hydroxy-4-oxobutanoate + trimethylamine + NADP(+) + H2O. The protein operates within amine and polyamine metabolism; carnitine metabolism. Its activity is regulated as follows. Inhibited by EDTA. Functionally, converts carnitine to trimethylamine and malic semialdehyde. Acts on both enantiomers. The protein is Carnitine monooxygenase oxygenase subunit of Acinetobacter pittii (strain PHEA-2).